An 85-amino-acid polypeptide reads, in one-letter code: Sugar transporter SemiSWEET (85 aa).

Positions 2-59 (ENLIGYVAAFLTTVSFLPQVLRVVMTKQTRDISRNMYIMFFLGVVLWFVYGILRSDLP) constitute a PQ-loop domain. 3 helical membrane-spanning segments follow: residues 5-25 (IGYV…LRVV), 33-53 (ISRN…VYGI), and 57-77 (DLPI…ILYY).

In terms of assembly, homodimer.

It localises to the cell membrane. The homodimer mediates transmembrane sugar transport down a concentration gradient. Transport is probably effected by rocking-type movements, where a cargo-binding cavity opens first on one and then on the other side of the membrane. In Leptospira biflexa serovar Patoc (strain Patoc 1 / ATCC 23582 / Paris), this protein is Sugar transporter SemiSWEET.